The following is a 97-amino-acid chain: Large ribosomal subunit protein bL28 (97 aa).

It belongs to the bacterial ribosomal protein bL28 family.

The protein is Large ribosomal subunit protein bL28 of Rhizorhabdus wittichii (strain DSM 6014 / CCUG 31198 / JCM 15750 / NBRC 105917 / EY 4224 / RW1) (Sphingomonas wittichii).